Here is a 115-residue protein sequence, read N- to C-terminus: MSNTQSVTAVAKYIRMSPHKIRRVLDQIRGRSYQEALMILEFLPYDAGGPIWQVIHSAAANAKHNSGLDKKKLIIDKVFADEGPKLKRIRPRAQGRAYKILKPTCHITVVMKAID.

It belongs to the universal ribosomal protein uL22 family. As to quaternary structure, part of the 50S ribosomal subunit.

The protein localises to the plastid. It is found in the chloroplast. Its function is as follows. This protein binds specifically to 23S rRNA. The globular domain of the protein is located near the polypeptide exit tunnel on the outside of the subunit, while an extended beta-hairpin is found that lines the wall of the exit tunnel in the center of the 70S ribosome. The chain is Large ribosomal subunit protein uL22c (rpl22) from Phaeodactylum tricornutum (strain CCAP 1055/1).